We begin with the raw amino-acid sequence, 782 residues long: Protein VAC14 homolog (782 aa).

Met1 carries the post-translational modification N-acetylmethionine. HEAT repeat units lie at residues 5–42 (KDFA…EFVA), 89–126 (LYLK…VARG), 171–208 (FDLV…VPDI), and 212–249 (DYLP…EIKK). Thr11 carries the post-translational modification Phosphothreonine. Disordered regions lie at residues 335–372 (EDDE…DGSC) and 471–517 (SSPA…LECS). An HEAT 5 repeat occupies 438-475 (RHTDSLFPILLQTLSDESDEVILKDLEVLAEIASSPAG). Over residues 478-488 (DDPGPLDGPDL) the composition is skewed to low complexity. The residue at position 499 (Thr499) is a Phosphothreonine. Positions 506–517 (LNTSGTKGLECS) are enriched in polar residues. Ser517 bears the Phosphoserine mark. An HEAT 6 repeat occupies 560 to 598 (LNAENIFHSMADILLREEDLKFASTMVHALNTILLTSTE). A Phosphoserine modification is found at Ser743. Positions 773 to 777 (GDHLD) are mediates interaction with the PDZ domain of NOS1.

This sequence belongs to the VAC14 family. In terms of assembly, forms pentamers. Component of the PI(3,5)P2 regulatory complex/PAS complex, at least composed of PIKFYVE, FIG4 and VAC14. VAC14 nucleates the assembly of the complex and serves as a scaffold by pentamerizing into a star-shaped structure, which can bind a single copy each of PIKFYVE and FIG4 and coordinates their activities. Interacts with NOS1. As to quaternary structure, (Microbial infection) Interacts with HTLV-1 Tax. Ubiquitously expressed.

Its subcellular location is the endosome membrane. The protein localises to the microsome membrane. Functionally, scaffold protein component of the PI(3,5)P2 regulatory complex which regulates both the synthesis and turnover of phosphatidylinositol 3,5-bisphosphate (PtdIns(3,5)P2). Pentamerizes into a star-shaped structure and nucleates the assembly of the complex. The pentamer binds a single copy each of PIKFYVE and FIG4 and coordinates both PIKfyve kinase activity and FIG4 phosphatase activity, being required to maintain normal levels of phosphatidylinositol 3-phosphate (PtdIns(3)P) and phosphatidylinositol 5-phosphate (PtdIns(5)P). Plays a role in the biogenesis of endosome carrier vesicles (ECV) / multivesicular bodies (MVB) transport intermediates from early endosomes. The sequence is that of Protein VAC14 homolog (VAC14) from Homo sapiens (Human).